The following is an 830-amino-acid chain: Periplasmic nitrate reductase (830 aa).

The tat-type signal signal peptide spans 1–31 (MKLSRRDFMKANAAVAAAAAAGMTIPTVAKA). The 4Fe-4S Mo/W bis-MGD-type domain occupies 39–95 (IKWDKAPCRFCGTGCGVLVGTQNGRIVASQGDPDSPVNRGLNCIKGYFLPKIMYGKD). [4Fe-4S] cluster is bound by residues C46, C49, C53, and C81. Mo-bis(molybdopterin guanine dinucleotide) contacts are provided by residues K83, Q150, N175, C179, 212-219 (WGSNMAEM), 243-247 (STYEH), 262-264 (QTD), M372, Q376, N482, 508-509 (SD), K531, D558, and 718-727 (TGRVLEHWHT). F794 is a substrate binding site. N802 and K819 together coordinate Mo-bis(molybdopterin guanine dinucleotide).

Belongs to the prokaryotic molybdopterin-containing oxidoreductase family. NasA/NapA/NarB subfamily. As to quaternary structure, component of the periplasmic nitrate reductase NapAB complex composed of NapA and NapB. Requires [4Fe-4S] cluster as cofactor. Mo-bis(molybdopterin guanine dinucleotide) serves as cofactor. In terms of processing, predicted to be exported by the Tat system. The position of the signal peptide cleavage has not been experimentally proven.

It is found in the periplasm. The enzyme catalyses 2 Fe(II)-[cytochrome] + nitrate + 2 H(+) = 2 Fe(III)-[cytochrome] + nitrite + H2O. In terms of biological role, catalytic subunit of the periplasmic nitrate reductase complex NapAB. Receives electrons from NapB and catalyzes the reduction of nitrate to nitrite. This chain is Periplasmic nitrate reductase, found in Yersinia pestis bv. Antiqua (strain Antiqua).